The chain runs to 318 residues: Transaldolase (318 aa).

Catalysis depends on Lys132, which acts as the Schiff-base intermediate with substrate.

It belongs to the transaldolase family. Type 1 subfamily. As to quaternary structure, homodimer.

The protein localises to the cytoplasm. The enzyme catalyses D-sedoheptulose 7-phosphate + D-glyceraldehyde 3-phosphate = D-erythrose 4-phosphate + beta-D-fructose 6-phosphate. The protein operates within carbohydrate degradation; pentose phosphate pathway; D-glyceraldehyde 3-phosphate and beta-D-fructose 6-phosphate from D-ribose 5-phosphate and D-xylulose 5-phosphate (non-oxidative stage): step 2/3. Transaldolase is important for the balance of metabolites in the pentose-phosphate pathway. The polypeptide is Transaldolase (Shewanella sp. (strain MR-4)).